A 375-amino-acid polypeptide reads, in one-letter code: POU domain, class 3, transcription factor 1-B (375 aa).

3 disordered regions span residues 1 to 29 (MAATAQYLPRNNSLPSNPLMHPDSDRMHQ), 56 to 139 (MSLT…QPLI), and 151 to 200 (MLGP…PSSD). 3 stretches are compositionally biased toward polar residues: residues 107 to 117 (VHQQTPSSHAW), 129 to 139 (SPGSNSHQPLI), and 151 to 160 (MLGPQASSLH). Residues 162 to 178 (SMRDPLHDDPGVHDTHV) are compositionally biased toward basic and acidic residues. The 75-residue stretch at 194–268 (EDAPSSDDLE…LLNKWLEETD (75 aa)) folds into the POU-specific domain. The homeobox DNA-binding region spans 286–345 (KRKKRTSIEVGVKGALENHFLKCPKPSAHEITSLADSLQLEKEVVRVWFCNRRQKEKRMT).

It belongs to the POU transcription factor family. Class-3 subfamily.

It localises to the nucleus. Functionally, acts as a transcription factor. May play a role in neuronal differentiation. The sequence is that of POU domain, class 3, transcription factor 1-B (pou3f1-b) from Xenopus laevis (African clawed frog).